A 347-amino-acid chain; its full sequence is Transcription factor EC (347 aa).

A necessary for transcriptional transactivation region spans residues Met-1–Ser-119. The bHLH domain occupies Gln-139–Leu-192. The tract at residues Pro-271–Leu-347 is necessary for transcriptional transactivation. Residues Asp-319–Leu-347 form a disordered region. Over residues Ser-326 to Ser-341 the composition is skewed to low complexity.

It belongs to the MiT/TFE family. In terms of assembly, homodimer. Forms heterodimers with TFE3. Forms heterodimers with MITF. Interacts with MITF. In terms of tissue distribution, expressed moderately in spleen, kidney, bone marrow, small intestine and leukocytes. Expressed weakly in testis, trachea and colon.

Its subcellular location is the nucleus. Functionally, transcriptional regulator that acts as a repressor or an activator. Acts as a transcriptional repressor on minimal promoter containing element F (that includes an E-box sequence). Binds to element F in an E-box sequence-specific manner. Acts as a transcriptional transactivator on the proximal promoter region of the tartrate-resistant acid phosphatase (TRAP) E-box containing promoter. Collaborates with MITF in target gene activation. Acts as a transcriptional repressor on minimal promoter containing mu E3 enhancer sequence. Binds to mu E3 DNA sequence of the immunoglobulin heavy-chain gene enhancer. Binds DNA in a homo- or heterodimeric form. This Homo sapiens (Human) protein is Transcription factor EC (TFEC).